Consider the following 343-residue polypeptide: Malate dehydrogenase, peroxisomal (343 aa).

NAD(+) contacts are provided by residues 8 to 14 (GASGGVG) and D34. Substrate-binding residues include R80 and R86. NAD(+) contacts are provided by residues N93 and 116–118 (ISN). 2 residues coordinate substrate: N118 and R152. Residue H187 is the Proton acceptor of the active site. M237 lines the NAD(+) pocket.

This sequence belongs to the LDH/MDH superfamily. MDH type 1 family. Homodimer.

It is found in the peroxisome. It carries out the reaction (S)-malate + NAD(+) = oxaloacetate + NADH + H(+). In Saccharomyces cerevisiae (strain ATCC 204508 / S288c) (Baker's yeast), this protein is Malate dehydrogenase, peroxisomal (MDH3).